Consider the following 493-residue polypeptide: Extracellular tyrosine-protein kinase PKDCC (493 aa).

The first 32 residues, 1-32 (MRRRRAAVAAGFCASFLLGSVLNVLFAPGSEP), serve as a signal peptide directing secretion. A disordered region spans residues 28-128 (PGSEPPRPGQ…PGPGSPGPGP (101 aa)). The span at 30-46 (SEPPRPGQSPEPSPAPG) shows a compositional bias: pro residues. Residues 52–69 (GRGELARQIRARYEEVQR) are compositionally biased toward basic and acidic residues. Composition is skewed to pro residues over residues 95-105 (PGLPRPRPPWA) and 114-127 (GWPP…PGPG). Asn-137 carries an N-linked (GlcNAc...) asparagine glycan. The Protein kinase domain occupies 138-493 (VSGAQYMGSG…NKTTYVKASG (356 aa)). Residues 144 to 152 (MGSGYTKAV) and Lys-166 contribute to the ATP site. Residue Tyr-148 is modified to Phosphotyrosine. Residue Ser-177 is modified to Phosphoserine. Asp-278 functions as the Proton acceptor in the catalytic mechanism. N-linked (GlcNAc...) asparagine glycans are attached at residues Asn-320, Asn-369, Asn-400, Asn-460, and Asn-484.

This sequence belongs to the protein kinase superfamily. In terms of processing, N-glycosylated. Post-translationally, phosphorylated on tyrosines; probably via autophosphorylation. Highly expressed in platelets.

It localises to the secreted. The protein resides in the golgi apparatus. It catalyses the reaction L-tyrosyl-[protein] + ATP = O-phospho-L-tyrosyl-[protein] + ADP + H(+). Secreted tyrosine-protein kinase that mediates phosphorylation of extracellular proteins and endogenous proteins in the secretory pathway, which is essential for patterning at organogenesis stages. Mediates phosphorylation of MMP1, MMP13, MMP14, MMP19 and ERP29. Probably plays a role in platelets: rapidly and quantitatively secreted from platelets in response to stimulation of platelet degranulation. May also have serine/threonine protein kinase activity. Required for longitudinal bone growth through regulation of chondrocyte differentiation. May be indirectly involved in protein transport from the Golgi apparatus to the plasma membrane. This is Extracellular tyrosine-protein kinase PKDCC from Homo sapiens (Human).